We begin with the raw amino-acid sequence, 346 residues long: Partitioning defective 6 homolog alpha (346 aa).

The tract at residues 1-116 is interaction with PRKCI and PRKCZ; the sequence is MARPQRTPAR…SNSLQRRKKG (116 aa). Residues 15-95 form the PB1 domain; sequence IVEVKSKFDA…PPLRLLVQKR (81 aa). Residues 126-253 form an interaction with PARD3 and CDC42 region; it reads RTRPPLLISL…VTVKPANQRN (128 aa). Positions 133-150 constitute a Pseudo-CRIB domain; it reads ISLPQDFRQVSSVIDVDL. Positions 157-250 constitute a PDZ domain; it reads RVRLHKHGSD…NLIVTVKPAN (94 aa). Disordered stretches follow at residues 257–294 and 317–346; these read RGASGRLTGPSSVGPGPTDPDSDDDNSDPVIENRHPPC and GSSLPSLDSREQANSGWGNGMRGDVSGFSL. S278 is subject to Phosphoserine. Residues 317–332 show a composition bias toward polar residues; the sequence is GSSLPSLDSREQANSG. The residue at position 345 (S345) is a Phosphoserine.

Belongs to the PAR6 family. As to quaternary structure, interacts with PALS1 and CRB3. Interacts with PARD3. Interacts with GTP-bound forms of CDC42, RHOQ/TC10 and RAC1. Interacts with the N-terminal part of PRKCI and PRKCZ. Part of a complex with PARD3, CDC42 or RAC1 and PRKCI or PRKCZ. Part of a complex with LLGL1 and PRKCI. Interacts with MAP2K5. Interacts with TGFBR1; involved in TGF-beta induced epithelial to mesenchymal transition. Interacts with ECT2 ('Thr-359' phosphorylated form) and PRKCI. Interacts with DCTN1 and PCM1. Phosphorylated by the TGF-beta receptor. Post-translationally, ubiquitinated by the SCF(FBXO31) complex, leading to its proteasomal degradation.

The protein localises to the cytoplasm. Its subcellular location is the cell membrane. It is found in the cell junction. It localises to the tight junction. The protein resides in the cytoskeleton. The protein localises to the microtubule organizing center. Its subcellular location is the centrosome. It is found in the centriolar satellite. Its function is as follows. Adapter protein involved in asymmetrical cell division and cell polarization processes. Probably involved in the formation of epithelial tight junctions. Association with PARD3 may prevent the interaction of PARD3 with F11R/JAM1, thereby preventing tight junction assembly. The PARD6-PARD3 complex links GTP-bound Rho small GTPases to atypical protein kinase C proteins. Regulates centrosome organization and function. Essential for the centrosomal recruitment of key proteins that control centrosomal microtubule organization. The protein is Partitioning defective 6 homolog alpha (Pard6a) of Rattus norvegicus (Rat).